A 97-amino-acid chain; its full sequence is MSLGGVSEASRATPEIQMIANKVRPQLEAKTNKKYEKFEAVEYKTQVVAGENIFIKMDVGHGCFIHIKVFNGPTGKDNYELHGYQTDKTMDEELTYF.

The short motif at 46-50 is the Secondary area of contact element; that stretch reads QVVAG.

This sequence belongs to the cystatin family.

The protein localises to the cytoplasm. Its function is as follows. This is an intracellular thiol proteinase inhibitor. The protein is Stefin-1 (Stfa1) of Mus musculus (Mouse).